Reading from the N-terminus, the 287-residue chain is MALSNLKSNRTLSSSLITIFIISLFLQYHNIKSQSSWQSRQVPRSETVAFSITEFEKENPDIFLRGDTSISDGILRLTKTDQSGKPLPNTVGRATYLTPIHIWDKTSGELADFSTSFSFIVNTNDSDLHGDGFAFYLGPLHFDVPKNSSGGYLGLFDPENAFPPSKTPILAIEFDGFTNEWDPPSSFQSPHIGIDVGSIVSLEYAQWPINFVPRNALGEANINYNSESKRLSVFVAYPGTQWNSTRVSVVVDLRSVLPEWVRIGFSATTGELVETHDIINWSFESAL.

Residues 1–11 lie on the Cytoplasmic side of the membrane; the sequence is MALSNLKSNRT. A helical membrane pass occupies residues 12–31; it reads LSSSLITIFIISLFLQYHNI. Residues 32–287 lie on the Extracellular side of the membrane; that stretch reads KSQSSWQSRQ…IINWSFESAL (256 aa). N-linked (GlcNAc...) asparagine glycans are attached at residues Asn124, Asn147, Asn243, and Asn280.

Belongs to the leguminous lectin family.

Its subcellular location is the membrane. May be involved in arbuscular mycorrhizal (AM) symbiosis with AM fungi. This is Lectin 10 from Medicago truncatula (Barrel medic).